Here is a 113-residue protein sequence, read N- to C-terminus: Integration host factor subunit alpha (113 aa).

It belongs to the bacterial histone-like protein family. As to quaternary structure, heterodimer of an alpha and a beta chain.

In terms of biological role, this protein is one of the two subunits of integration host factor, a specific DNA-binding protein that functions in genetic recombination as well as in transcriptional and translational control. The protein is Integration host factor subunit alpha of Rhodopseudomonas palustris (strain BisA53).